Reading from the N-terminus, the 8799-residue chain is Nesprin-1 (8799 aa).

Positions 1–289 are actin-binding; that stretch reads MATSRASSRS…TQYPDIHGAG (289 aa). The Cytoplasmic segment spans residues 1 to 8748; the sequence is MATSRASSRS…GRAFLFRILR (8748 aa). Calponin-homology (CH) domains follow at residues 27-134 and 178-283; these read IVQK…LYFQ and GNAK…TQYP. 52 Spectrin repeats span residues 314 to 397, 398 to 502, 503 to 609, 610 to 703, 704 to 815, 816 to 923, 924 to 1024, 1025 to 1122, 1123 to 1246, 1247 to 1333, 1334 to 1442, 1443 to 1548, 1549 to 1651, 1652 to 1761, 1762 to 1877, 1878 to 1974, 1975 to 2079, 2080 to 2193, 2194 to 2301, 2302 to 2399, 2400 to 2511, 2512 to 2617, 2618 to 2729, 2730 to 2836, 2837 to 2960, 2961 to 3060, 3061 to 3169, 3170 to 3273, 3274 to 3385, 3386 to 3488, 3489 to 3591, 3592 to 3718, 3719 to 3812, 3813 to 3918, 3919 to 4026, 4027 to 4137, 4138 to 4233, 4234 to 4337, 4338 to 4449, 4450 to 4558, 4559 to 4667, 4668 to 4774, 4775 to 4880, 4881 to 4989, 4990 to 5097, 5098 to 5207, 5208 to 5316, 5317 to 5422, 5423 to 5520, 5521 to 5628, 5629 to 5745, and 5746 to 5851; these read RDDR…SRLF, DWHI…HLMK, MEFL…SMLE, EVIS…YARA, DEMD…QLTV, PLEE…KHVE, ANSR…HLKI, AVEK…LVDD, PDKW…SSLE, GLIS…ERRI, QVSL…MEMV, KSKW…ILGH, LSQQ…LEDL, LARW…LQSV, LAEH…SHAC, MSTL…ADAL, VALK…QGQC, CGLI…LRVS, LSIW…KDFT, AQRT…QTQA, RIQD…LQDC, VSEL…LRSC, QLAL…LESV, IDQW…VEDL, VKDH…FGQV, TQLE…QNKE, QILQ…LENL, KIQM…VSRL, DRII…LEGA, LSKW…LEKL, VRLH…RMQL, NNVV…YSDW, YGST…LEKG, LHLA…LEAK, VKDH…QRVY, RSLE…KSLK, AELW…REQD, LQRT…IQVS, VTNL…LNKA, LSEK…LEKS, LVSR…TQEA, ILAR…LEDT, TSVY…CESR, MVQS…LTEI, YSRC…LQRC, MVQW…LEDA, VDEW…GKLV, KQEL…EEGK, AMSQ…LSKL, NQAL…LQDA, AKDM…PKEA, and VVQY…PSAH. Residues 314 to 8666 are a coiled coil; it reads RDDRLILKET…DLEKLLDMSS (8353 aa). K377 is modified (phosphoserine). Phosphoserine is present on S732. The disordered stretch occupies residues 1288–1310; sequence KKRDLQEQMEQAQQGGQAGPGQE. T2268 is modified (phosphothreonine). A Phosphoserine modification is found at S5655. A disordered region spans residues 5868–5894; sequence PVTEESGEEGTNSEISSPPACRSPSPV. 19 Spectrin repeats span residues 5971–6080, 6081–6187, 6377–6488, 6489–6584, 6585–6694, 6695–6798, 6799–6905, 6906–7023, 7024–7131, 7132–7240, 7241–7353, 7354–7457, 7458–7561, 7562–7674, 7675–7786, 7787–7886, 7887–8000, 8001–8109, and 8110–8221; these read LERQ…LEEK, LSDQ…SLGE, RQSI…RLQQ, ILRF…RSSL, HQNL…LEMW, SHLD…TILK, HWTR…QEKL, HQLQ…LEGL, LESW…LTSA, LGQW…SKAL, LQLW…LQAG, VVDY…LQSF, LLQH…RGII, DSQI…LAFL, LKDW…NEWA, VFSE…LKET, LVAV…IEET, WRLW…LKHF, and ISQR…VRLP. D8225 and S8227 each carry phosphoserine. The interval 8237 to 8287 is disordered; the sequence is TALSDLRWQDPSADGMPSPQPSSNPSLSLPQPLRSERSGRDTPASVDSIPL. The segment covering 8257–8269 has biased composition (low complexity); it reads PSSNPSLSLPQPL. The residue at position 8278 (T8278) is a Phosphothreonine. A phosphoserine mark is found at S8281, S8284, and S8308. 3 Spectrin repeats span residues 8332–8440, 8441–8550, and 8551–8668; these read SSLE…MKQN, LQKW…LQDA, and LMQC…SSSQ. T8363 carries the phosphothreonine modification. The tract at residues 8673 to 8735 is disordered; the sequence is SWSSADELDT…SDSSRSDPRP (63 aa). 2 stretches are compositionally biased toward polar residues: residues 8682 to 8698 and 8706 to 8718; these read TSGS…PNRQ and SLSQ…SSPK. The span at 8721-8735 shows a compositional bias: basic and acidic residues; that stretch reads STRDGSDSSRSDPRP. Positions 8740-8799 constitute a KASH domain; that stretch reads RAFLFRILRAALPFQLLLLLLIGLTCLVPMSEKDYSCALSNNFARSFHPMLRYTNGPPPL. Residues 8749 to 8769 form a helical; Anchor for type IV membrane protein membrane-spanning segment; the sequence is AALPFQLLLLLLIGLTCLVPM. Residues 8770–8799 are Perinuclear space-facing; the sequence is SEKDYSCALSNNFARSFHPMLRYTNGPPPL.

Belongs to the nesprin family. Core component of LINC complexes which are composed of inner nuclear membrane SUN domain-containing proteins coupled to outer nuclear membrane KASH domain-containing nesprins. SUN and KASH domain-containing proteins seem to bind each other promiscuously; however, differentially expression of LINC complex constituents can give rise to specific assemblies. At least SUN1/2-containing core LINC complexes are proposed to be hexameric composed of three protomers of each KASH and SUN domain-containing protein. The SUN2:SYNE1/KASH1 LINC complex is a heterohexamer; the homotrimeric cloverleave-like conformation of the SUN domain is a prerequisite for LINC complex formation in which three separate SYNE1/KASH1 peptides bind at the interface of adjacent SUN domains. Self-associates. Interacts with SYNE3. Interacts with SUN3; proposed to form a spermatogenesis-specific LINC complex with SUN3 during sperm head formation. May interact with MUSK. Interacts with SPAG4/SUN4. Interacts with EMD and LMNA in vitro. Interacts with F-actin via its N-terminal domain. Interacts with DCTN1 and DYNC1I1/2; suggesting the association with the dynein-dynactin motor complex. Interacts (via KASH domain) with TMEM258. In terms of processing, the disulfid bond with SUN1 or SUN2 is required for stability of the respective LINC complex under tensile forces. Expressed in C2F3 and CH310T1/2 cells, brain and skeletal muscle (at protein level).

It localises to the nucleus outer membrane. Its subcellular location is the nucleus. The protein localises to the nucleus envelope. The protein resides in the cytoplasm. It is found in the cytoskeleton. It localises to the myofibril. Its subcellular location is the sarcomere. In terms of biological role, multi-isomeric modular protein which forms a linking network between organelles and the actin cytoskeleton to maintain the subcellular spatial organization. As a component of the LINC (LInker of Nucleoskeleton and Cytoskeleton) complex involved in the connection between the nuclear lamina and the cytoskeleton. The nucleocytoplasmic interactions established by the LINC complex play an important role in the transmission of mechanical forces across the nuclear envelope and in nuclear movement and positioning. May be involved in nucleus-centrosome attachment. During interkinetic nuclear migration (INM) at G2 phase and nuclear migration in neural progenitors its LINC complex association with SUN1/2 and probably association with cytoplasmic dynein-dynactin motor complexes functions to pull the nucleus toward the centrosome; SYNE1 and SYNE2 seem to act redundantly in cerebellum, midbrain, brain stem, and other brain regions except cerebral cortex and hippocampus. Required for centrosome migration to the apical cell surface during early ciliogenesis. May be involved in nuclear remodeling during sperm head formation in spermatogenesis; a probable SUN3:SYNE1/KASH1 LINC complex may tether spermatid nuclei to posterior cytoskeletal structures such as the manchette. This is Nesprin-1 from Mus musculus (Mouse).